The primary structure comprises 419 residues: Histidine--tRNA ligase (419 aa).

This sequence belongs to the class-II aminoacyl-tRNA synthetase family. Homodimer.

It is found in the cytoplasm. It carries out the reaction tRNA(His) + L-histidine + ATP = L-histidyl-tRNA(His) + AMP + diphosphate + H(+). The sequence is that of Histidine--tRNA ligase from Thermosipho melanesiensis (strain DSM 12029 / CIP 104789 / BI429).